Reading from the N-terminus, the 122-residue chain is uncharacterized protein (122 aa).

Transmembrane regions (helical) follow at residues 43 to 63 (PIII…IFFI) and 76 to 96 (AVAD…ILYF).

The protein localises to the membrane. This is an uncharacterized protein from Schizosaccharomyces pombe (strain 972 / ATCC 24843) (Fission yeast).